The primary structure comprises 374 residues: Chaperone protein DnaJ (374 aa).

Residues 5–69 (DYYEVLGVSK…DKKAKYDQFG (65 aa)) enclose the J domain. A CR-type zinc finger spans residues 141–223 (GVNKKTILNL…CHGKGVESKR (83 aa)). Zn(2+) contacts are provided by cysteine 154, cysteine 157, cysteine 171, cysteine 174, cysteine 197, cysteine 200, cysteine 211, and cysteine 214. 4 CXXCXGXG motif repeats span residues 154–161 (CTKCDGVG), 171–178 (CTKCNGAG), 197–204 (CDKCNGVG), and 211–218 (CKNCHGKG).

Belongs to the DnaJ family. Homodimer. Requires Zn(2+) as cofactor.

It is found in the cytoplasm. Participates actively in the response to hyperosmotic and heat shock by preventing the aggregation of stress-denatured proteins and by disaggregating proteins, also in an autonomous, DnaK-independent fashion. Unfolded proteins bind initially to DnaJ; upon interaction with the DnaJ-bound protein, DnaK hydrolyzes its bound ATP, resulting in the formation of a stable complex. GrpE releases ADP from DnaK; ATP binding to DnaK triggers the release of the substrate protein, thus completing the reaction cycle. Several rounds of ATP-dependent interactions between DnaJ, DnaK and GrpE are required for fully efficient folding. Also involved, together with DnaK and GrpE, in the DNA replication of plasmids through activation of initiation proteins. The chain is Chaperone protein DnaJ from Mesoplasma florum (strain ATCC 33453 / NBRC 100688 / NCTC 11704 / L1) (Acholeplasma florum).